The primary structure comprises 291 residues: 33 kDa chaperonin (291 aa).

2 disulfide bridges follow: C229-C231 and C262-C265.

Belongs to the HSP33 family. Under oxidizing conditions two disulfide bonds are formed involving the reactive cysteines. Under reducing conditions zinc is bound to the reactive cysteines and the protein is inactive.

It localises to the cytoplasm. Functionally, redox regulated molecular chaperone. Protects both thermally unfolding and oxidatively damaged proteins from irreversible aggregation. Plays an important role in the bacterial defense system toward oxidative stress. This chain is 33 kDa chaperonin, found in Aliivibrio fischeri (strain ATCC 700601 / ES114) (Vibrio fischeri).